A 41-amino-acid chain; its full sequence is Large ribosomal subunit protein bL36 (41 aa).

This sequence belongs to the bacterial ribosomal protein bL36 family.

This Bartonella quintana (strain Toulouse) (Rochalimaea quintana) protein is Large ribosomal subunit protein bL36.